The chain runs to 190 residues: 3-isopropylmalate dehydratase small subunit (190 aa).

Belongs to the LeuD family. LeuD type 1 subfamily. In terms of assembly, heterodimer of LeuC and LeuD.

The catalysed reaction is (2R,3S)-3-isopropylmalate = (2S)-2-isopropylmalate. It functions in the pathway amino-acid biosynthesis; L-leucine biosynthesis; L-leucine from 3-methyl-2-oxobutanoate: step 2/4. In terms of biological role, catalyzes the isomerization between 2-isopropylmalate and 3-isopropylmalate, via the formation of 2-isopropylmaleate. The chain is 3-isopropylmalate dehydratase small subunit from Staphylococcus aureus (strain USA300).